We begin with the raw amino-acid sequence, 66 residues long: Beta-toxin Cbo1 (66 aa).

One can recognise an LCN-type CS-alpha/beta domain in the interval 1–66; that stretch reads KEGYLVNHST…VWPLPKKTCN (66 aa). Cystine bridges form between Cys-12–Cys-65, Cys-16–Cys-41, Cys-25–Cys-46, and Cys-29–Cys-48. Asparagine amide is present on Asn-66.

This sequence belongs to the long (4 C-C) scorpion toxin superfamily. Sodium channel inhibitor family. Beta subfamily. Expressed by the venom gland.

The protein localises to the secreted. Functionally, beta toxins bind voltage-independently at site-4 of sodium channels and shift the voltage of activation toward more negative potentials thereby affecting sodium channel activation and promoting spontaneous and repetitive firing. Is active on the human voltage-gated sodium channel Nav1.6/SCN8A when tested at 200 nM. In vivo, is toxic to mice when intraperitoneally injected. The sequence is that of Beta-toxin Cbo1 from Centruroides bonito (Scorpion).